We begin with the raw amino-acid sequence, 142 residues long: Small ribosomal subunit protein uS9 (142 aa).

It belongs to the universal ribosomal protein uS9 family. As to quaternary structure, component of the small ribosomal subunit (SSU). Mature N.crassa ribosomes consist of a small (40S) and a large (60S) subunit. The 40S small subunit contains 1 molecule of ribosomal RNA (18S rRNA) and at least 32 different proteins. The large 60S subunit contains 3 rRNA molecules (26S, 5.8S and 5S rRNA) and at least 42 different proteins.

The protein localises to the cytoplasm. Its function is as follows. Component of the ribosome, a large ribonucleoprotein complex responsible for the synthesis of proteins in the cell. The small ribosomal subunit (SSU) binds messenger RNAs (mRNAs) and translates the encoded message by selecting cognate aminoacyl-transfer RNA (tRNA) molecules. The large subunit (LSU) contains the ribosomal catalytic site termed the peptidyl transferase center (PTC), which catalyzes the formation of peptide bonds, thereby polymerizing the amino acids delivered by tRNAs into a polypeptide chain. The nascent polypeptides leave the ribosome through a tunnel in the LSU and interact with protein factors that function in enzymatic processing, targeting, and the membrane insertion of nascent chains at the exit of the ribosomal tunnel. In Neurospora crassa (strain ATCC 24698 / 74-OR23-1A / CBS 708.71 / DSM 1257 / FGSC 987), this protein is Small ribosomal subunit protein uS9 (rps-16).